Consider the following 579-residue polypeptide: MSAPTSRHLYGRLLGYVKPHWRMFALSIVGLILTAATEPMLPALFKPLLDEGFVAKDQDFIRWVPLLLLGLFVLRGVASFISTYSMAWVGSRLVMDLRAAMFDKLMALPTRYFDQNPSGQLIAQLAFNVTQVTQSATSSLTTLVRDTVTVLGLLGYLVWLNWRLTLIVFALVPLTLWVVRVASKRLRGLSRKAQENIGDLTQVVDEAVGGHRVVKLYGGETYEQARFHRAANLARQFEMKRVAANAVYEPVIQFIAAIALAIIVFIAAGQASANTTTVGGFVAFFMAMLLLFAPLKRLTAVNDQLQRGLAASETIFALLDQDAERDTGTREPAHIEGRLAFRDVGLTYPGKQTPALARISLDIAPGETVALVGASGSGKTTLANLVPRFYDPDAGRIELDGVDIRDVKLQSLRGHIALVSQDVVLFNDTLAHNIAYGSKREASPDEIRAACVAAHAWDFIQAMPDGLDTLIGENGMRLSGGQRQRIAIARAILKNAPILILDEATSALDSESERHVQAALETLMQNRTTLVIAHRLSTIERANRIVVLEGGRIVETGAHADLLAKQGRYAQLHALQFSQ.

The next 5 helical transmembrane spans lie at 24-44, 63-83, 150-170, 251-271, and 275-295; these read FALSIVGLILTAATEPMLPAL, WVPLLLLGLFVLRGVASFIST, VLGLLGYLVWLNWRLTLIVFA, VIQFIAAIALAIIVFIAAGQA, and TTTVGGFVAFFMAMLLLFAPL. Positions 25 to 307 constitute an ABC transmembrane type-1 domain; the sequence is ALSIVGLILT…LTAVNDQLQR (283 aa). The 237-residue stretch at 339–575 folds into the ABC transporter domain; sequence LAFRDVGLTY…QGRYAQLHAL (237 aa). Position 373 to 380 (373 to 380) interacts with ATP; that stretch reads GASGSGKT.

The protein belongs to the ABC transporter superfamily. Lipid exporter (TC 3.A.1.106) family. Homodimer.

It localises to the cell inner membrane. It carries out the reaction ATP + H2O + lipid A-core oligosaccharideSide 1 = ADP + phosphate + lipid A-core oligosaccharideSide 2.. Its function is as follows. Involved in lipopolysaccharide (LPS) biosynthesis. Translocates lipid A-core from the inner to the outer leaflet of the inner membrane. Transmembrane domains (TMD) form a pore in the inner membrane and the ATP-binding domain (NBD) is responsible for energy generation. The polypeptide is ATP-dependent lipid A-core flippase (Thiobacillus denitrificans (strain ATCC 25259 / T1)).